Consider the following 278-residue polypeptide: S-methyl-5'-thioadenosine phosphorylase (278 aa).

Phosphate-binding positions include S13, 55–56 (RH), and 88–89 (TA). A substrate-binding site is contributed by M190. T191 lines the phosphate pocket. 214-216 (DYD) is a binding site for substrate.

Belongs to the PNP/MTAP phosphorylase family. MTAP subfamily. In terms of assembly, homotrimer.

The protein localises to the cytoplasm. It is found in the nucleus. It catalyses the reaction S-methyl-5'-thioadenosine + phosphate = 5-(methylsulfanyl)-alpha-D-ribose 1-phosphate + adenine. It participates in amino-acid biosynthesis; L-methionine biosynthesis via salvage pathway; S-methyl-5-thio-alpha-D-ribose 1-phosphate from S-methyl-5'-thioadenosine (phosphorylase route): step 1/1. Functionally, catalyzes the reversible phosphorylation of S-methyl-5'-thioadenosine (MTA) to adenine and 5-methylthioribose-1-phosphate. Involved in the breakdown of MTA, a major by-product of polyamine biosynthesis. Responsible for the first step in the methionine salvage pathway after MTA has been generated from S-adenosylmethionine. Has broad substrate specificity with 6-aminopurine nucleosides as preferred substrates. The protein is S-methyl-5'-thioadenosine phosphorylase of Anopheles gambiae (African malaria mosquito).